The primary structure comprises 123 residues: Ribulose bisphosphate carboxylase small subunit, chloroplastic 1 (123 aa).

Position 1 is a methionine derivative (M1).

The protein belongs to the RuBisCO small chain family. As to quaternary structure, heterohexadecamer of 8 large and 8 small subunits.

It localises to the plastid. The protein localises to the chloroplast. RuBisCO catalyzes two reactions: the carboxylation of D-ribulose 1,5-bisphosphate, the primary event in carbon dioxide fixation, as well as the oxidative fragmentation of the pentose substrate. Both reactions occur simultaneously and in competition at the same active site. Although the small subunit is not catalytic it is essential for maximal activity. The sequence is that of Ribulose bisphosphate carboxylase small subunit, chloroplastic 1 from Spinacia oleracea (Spinach).